We begin with the raw amino-acid sequence, 728 residues long: Double-strand break repair protein mre-11 (728 aa).

Residues 1–12 (MCGSDDSFDDFV) are compositionally biased toward acidic residues. A disordered region spans residues 1–45 (MCGSDDSFDDFVPDSQEPASSRTRNQDHLDDDEVPCSQRPDAAND). Asp-73, His-75, Asp-113, and Asn-181 together coordinate Mn(2+). His-182 functions as the Proton donor in the catalytic mechanism. Mn(2+) contacts are provided by His-269, His-301, and His-303. Residues 601–728 (KNPVADVEME…PSKKRDLSFF (128 aa)) form a disordered region. Acidic residues predominate over residues 607–616 (VEMEEDEDDP). Residues 622–632 (PQSTSRTNYAS) are compositionally biased toward polar residues. Acidic residues predominate over residues 634-645 (SEDEVANSDEEM).

The protein belongs to the MRE11/RAD32 family. Component of the MRN complex composed of two heterodimers rad-50 and mre-11 associated with a single nbs-1. Requires Mn(2+) as cofactor.

The protein resides in the nucleus. It is found in the chromosome. In terms of biological role, core component of the MRN complex, which plays a central role in double-strand break (DSB) repair, DNA recombination, maintenance of telomere integrity and meiosis. The MRN complex is involved in the repair of DNA double-strand breaks (DSBs) via homologous recombination (HR), an error-free mechanism which primarily occurs during S and G2 phases. The complex (1) mediates the end resection of damaged DNA, which generates proper single-stranded DNA, a key initial steps in HR, and is (2) required for the recruitment of other repair factors and efficient activation of ATM and ATR upon DNA damage. Within the MRN complex, mre-11 possesses both single-strand endonuclease activity and double-strand-specific 3'-5' exonuclease activity. Mre-11 first endonucleolytically cleaves the 5' strand at DNA DSB ends to prevent non-homologous end joining (NHEJ) and licence HR. It then generates a single-stranded DNA gap via 3' to 5' exonucleolytic degradation, which is required for single-strand invasion and recombination. Required for meiotic crossing over and chiasma formation. Pachytene morphology and homolog pairing are normal. Vital in long term for maintenance of reproductive capacity of subsequent generations. The protein is Double-strand break repair protein mre-11 of Caenorhabditis elegans.